The sequence spans 138 residues: Peptide methionine sulfoxide reductase MsrB (138 aa).

A MsrB domain is found at glutamate 15–arginine 137. Zn(2+) is bound by residues cysteine 54, cysteine 57, cysteine 103, and cysteine 106. The active-site Nucleophile is the cysteine 126.

It belongs to the MsrB Met sulfoxide reductase family. Zn(2+) is required as a cofactor.

The enzyme catalyses L-methionyl-[protein] + [thioredoxin]-disulfide + H2O = L-methionyl-(R)-S-oxide-[protein] + [thioredoxin]-dithiol. The polypeptide is Peptide methionine sulfoxide reductase MsrB (Methylibium petroleiphilum (strain ATCC BAA-1232 / LMG 22953 / PM1)).